We begin with the raw amino-acid sequence, 457 residues long: uncharacterized protein (457 aa).

A run of 14 helical transmembrane segments spans residues 15 to 35 (YGAI…GAIA), 54 to 74 (IWVV…FSFL), 87 to 107 (GLVV…LQML), 112 to 132 (VIQG…IRLI), 144 to 164 (INSF…AAIL), 166 to 186 (IASW…ALLL), 205 to 225 (LPSA…LSGF), 229 to 249 (QSLT…IFFI), 269 to 289 (LFSL…LAMV), 308 to 328 (LLLT…GYLI), 334 to 354 (GLLG…LVLL), 357 to 377 (SPAD…FGLF), 400 to 420 (MLGT…ALML), and 428 to 448 (THVS…VSGL).

This sequence belongs to the major facilitator superfamily. TCR/Tet family.

The protein resides in the cell inner membrane. This is an uncharacterized protein from Escherichia coli (strain K12).